A 24-amino-acid polypeptide reads, in one-letter code: Gaegurin-6 (24 aa).

A disulfide bridge connects residues cysteine 18 and cysteine 24.

Belongs to the frog skin active peptide (FSAP) family. Brevinin subfamily. Monomer. As to expression, expressed by the skin glands.

The protein localises to the secreted. Functionally, has a non-hemolytic activity. Has a broad spectrum of activity against both Gram-positive and Gram-negative bacteria, fungi and protozoa. The sequence is that of Gaegurin-6 (GGN6) from Glandirana rugosa (Japanese wrinkled frog).